A 412-amino-acid polypeptide reads, in one-letter code: Adipocyte plasma membrane-associated protein (412 aa).

A disordered region spans residues 1-32 (MTEADGLRQRRPLRPQVVTDDNRTPEAKGGSS). Residues 1–39 (MTEADGLRQRRPLRPQVVTDDNRTPEAKGGSSFSGRVFR) lie on the Cytoplasmic side of the membrane. The residue at position 19 (threonine 19) is a Phosphothreonine. A helical membrane pass occupies residues 40–60 (ATFLMLAAFLTIPLLGALVLL). Residues 61-412 (DSPIDPEPLS…RAPYLCRLRL (352 aa)) are Extracellular-facing. Residue asparagine 159 is glycosylated (N-linked (GlcNAc...) asparagine).

Belongs to the strictosidine synthase family.

The protein localises to the membrane. Its function is as follows. Exhibits strong arylesterase activity with beta-naphthyl acetate and phenyl acetate. May play a role in adipocyte differentiation. This chain is Adipocyte plasma membrane-associated protein (APMAP), found in Bos taurus (Bovine).